A 263-amino-acid chain; its full sequence is 3-deoxy-manno-octulosonate cytidylyltransferase 2 (263 aa).

The protein belongs to the KdsB family.

It localises to the cytoplasm. The enzyme catalyses 3-deoxy-alpha-D-manno-oct-2-ulosonate + CTP = CMP-3-deoxy-beta-D-manno-octulosonate + diphosphate. It functions in the pathway nucleotide-sugar biosynthesis; CMP-3-deoxy-D-manno-octulosonate biosynthesis; CMP-3-deoxy-D-manno-octulosonate from 3-deoxy-D-manno-octulosonate and CTP: step 1/1. The protein operates within bacterial outer membrane biogenesis; lipopolysaccharide biosynthesis. Activates KDO (a required 8-carbon sugar) for incorporation into bacterial lipopolysaccharide in Gram-negative bacteria. The sequence is that of 3-deoxy-manno-octulosonate cytidylyltransferase 2 from Paraburkholderia phytofirmans (strain DSM 17436 / LMG 22146 / PsJN) (Burkholderia phytofirmans).